The chain runs to 581 residues: MSGFVVWFTGLSGAGKSTLAAMLSAELRARSVHVEVLDGDEVRTNLSKGLGFSKEDRDTNIRRIGYVAKLIARSGACAMTAAISPYKAIRDEQRAQIPHFVEVFCSCEIPVLAERDAKGLYKKALAGEIKNFTGIDDPYEAPESPEVVVDTGKETKEESLAKILAKLEELGYVPRRGAAVAVSGAAAAGAAAGGARGLIAPHGGELVNRWVEGAAKASLAERAKGLPVIELDERTESDVEMIAIGAFSPLRGFMNSKDYLRVVREMRLESGLPWSMPITLAVSEQAAEGLRVGSEAALRARDGRIVAVIELSDKWRPNKELEAQEVFRTTETKHPGVAYLMSTGPVYLGGEIRVLERPVDSAFPAYDRSPATTRAYFAEKGWRRIVGFQTRNPIHRAHEFITKTALEICDGLMIHPLVGATKSDDIPADVRMRCYEELIAKYYVKDRVLLSIYPAAMRYAGPREAIFHALARKNYGCSHFIVGRDHAGVGSYYGTYDAQEIFNAFSPGELGITTLNFENAFYSTVVGAMATAKTAPGDASTQVNLSGTKVRELLQRGELPPPEFSRPEVARILIESMRSSS.

The adenylsulfate kinase stretch occupies residues 1-200; it reads MSGFVVWFTG…AAGGARGLIA (200 aa). 10–17 contributes to the ATP binding site; the sequence is GLSGAGKS. Ser84 functions as the Phosphoserine intermediate in the catalytic mechanism. Positions 201–581 are sulfate adenylyltransferase; sequence PHGGELVNRW…ILIESMRSSS (381 aa).

In the N-terminal section; belongs to the APS kinase family. It in the C-terminal section; belongs to the sulfate adenylyltransferase family.

The enzyme catalyses sulfate + ATP + H(+) = adenosine 5'-phosphosulfate + diphosphate. The catalysed reaction is adenosine 5'-phosphosulfate + ATP = 3'-phosphoadenylyl sulfate + ADP + H(+). The protein operates within sulfur metabolism; hydrogen sulfide biosynthesis; sulfite from sulfate: step 1/3. Its pathway is sulfur metabolism; hydrogen sulfide biosynthesis; sulfite from sulfate: step 2/3. The protein is Probable bifunctional SAT/APS kinase 2 (sat2/cysC2) of Sorangium cellulosum (strain So ce56) (Polyangium cellulosum (strain So ce56)).